A 498-amino-acid chain; its full sequence is ADP,ATP carrier protein 1 (498 aa).

At 1–33 (MSTSKSENYLSELRKIIWPIEQHENKKFLPLAF) the chain is on the cytoplasmic side. Residues 34-54 (MMFCILLNYSTLRSIKDGFVV) traverse the membrane as a helical segment. A disulfide bond links Cys37 and Cys85. Residues 55–67 (TDIGTESISFLKT) lie on the Extracellular side of the membrane. The chain crosses the membrane as a helical span at residues 68 to 88 (YIVLPSAVIAMVIYVKLCDIL). The Cytoplasmic portion of the chain corresponds to 89 to 92 (KQEN). A helical transmembrane segment spans residues 93–113 (IFYVITSFFLGYFALFAFVLY). Residues 114 to 147 (PYPDLVHPDHKTIESLSLAYPNFKWFIKIVGKWS) are Extracellular-facing. The chain crosses the membrane as a helical span at residues 148-168 (FASFYTIAELWGTMMLSLLFW). At 169–184 (QFANQITKITEAKRFY) the chain is on the cytoplasmic side. A helical membrane pass occupies residues 185 to 205 (SMFGLLANLALPVTSVVIGYF). Residues 206 to 218 (LHEKTQIVSEHLK) lie on the Extracellular side of the membrane. A helical transmembrane segment spans residues 219 to 239 (FIPLFVIMITSSFLIILTYRW). The Cytoplasmic segment spans residues 240–279 (MNKNVLTDPRLYDPTLVKEKKAKAKLSFIESFKMIFTSKY). Residues 280 to 300 (VGYIALLIIAYGVSVNLVEGV) form a helical membrane-spanning segment. Residues 301–320 (WKSKVKELYPTKEAYTIYMG) are Extracellular-facing. The chain crosses the membrane as a helical span at residues 321-341 (QFQFYQGWVAIAFMLIGSNIL). Residues 342–348 (RKVSWLT) are Cytoplasmic-facing. The chain crosses the membrane as a helical span at residues 349–369 (AAMITPLMMFITGAAFFSFIF). Residues 370-379 (FDSVIAMNLT) lie on the Extracellular side of the membrane. The helical transmembrane segment at 380-400 (GILASSPLTLAVMFGMIQNVL) threads the bilayer. Residues 401–438 (SKGVKYSLFDATKNMAYIPLDKDLRVKGQAAVEVIGGR) lie on the Cytoplasmic side of the membrane. Residue 436-442 (GGRLGKS) coordinates ATP. A helical membrane pass occupies residues 439–459 (LGKSGGAIIQSTFFILFPAFG). The Extracellular segment spans residues 460-465 (FIEATP). A helical transmembrane segment spans residues 466-486 (YFASIFFIIVILWIFAVKGLN). Residues 487 to 498 (KEYQVLVNKNEN) are Cytoplasmic-facing.

Belongs to the ADP/ATP translocase tlc family.

The protein localises to the cell membrane. In terms of biological role, provides the rickettsial cell with host ATP in exchange for rickettsial ADP. This is an obligate exchange system. This energy acquiring activity is an important component of rickettsial parasitism. This Rickettsia typhi (strain ATCC VR-144 / Wilmington) protein is ADP,ATP carrier protein 1 (tlcA).